Here is a 403-residue protein sequence, read N- to C-terminus: F-box/kelch-repeat protein At5g43190 (403 aa).

Residues 45–91 enclose the F-box domain; it reads PNIWSNLPNHLLEHILSLLPFKTLLTLRSISRHLRSLILSPSFISDH. Kelch repeat units follow at residues 91 to 140, 192 to 240, 291 to 339, and 343 to 393; these read HSFS…LLSS, KIFT…VFYN, ILYM…VCYH, and HVYC…FRWF.

This is F-box/kelch-repeat protein At5g43190 from Arabidopsis thaliana (Mouse-ear cress).